The following is a 524-amino-acid chain: Translation initiation factor eIF2B subunit delta (524 aa).

The disordered stretch occupies residues 1-155; it reads MAAVAVAVRE…EHTPADDPTL (155 aa). N-acetylalanine is present on Ala-2. Composition is skewed to basic and acidic residues over residues 8–20 and 31–40; these read VREESRSEMKTEL and LTQEEKLQLR. Ser-12 carries the phosphoserine modification. The span at 41–51 shows a compositional bias: basic residues; the sequence is KEKKQQKKKRK. Thr-86 is subject to Phosphothreonine. The span at 96–121 shows a compositional bias: basic and acidic residues; it reads SKAELRAERRAKQEAERALKQARKGE. Residues 130-140 are compositionally biased toward polar residues; sequence CPSTAGETTSG. The segment at 171-180 is may bind the chemical integrated stress response (ISR) inhibitor ISRIB; sequence RKDYGSKVSL.

Belongs to the eIF-2B alpha/beta/delta subunits family. In terms of assembly, component of the translation initiation factor 2B (eIF2B) complex which is a heterodecamer of two sets of five different subunits: alpha, beta, gamma, delta and epsilon. Subunits alpha, beta and delta comprise a regulatory subcomplex and subunits epsilon and gamma comprise a catalytic subcomplex. Within the complex, the hexameric regulatory complex resides at the center, with the two heterodimeric catalytic subcomplexes bound on opposite sides.

The protein localises to the cytoplasm. It localises to the cytosol. Activated by the chemical integrated stress response (ISR) inhibitor ISRIB which stimulates guanine nucleotide exchange factor activity for both phosphorylated and unphosphorylated eIF2. In terms of biological role, acts as a component of the translation initiation factor 2B (eIF2B) complex, which catalyzes the exchange of GDP for GTP on eukaryotic initiation factor 2 (eIF2) gamma subunit. Its guanine nucleotide exchange factor activity is repressed when bound to eIF2 complex phosphorylated on the alpha subunit, thereby limiting the amount of methionyl-initiator methionine tRNA available to the ribosome and consequently global translation is repressed. In Mus musculus (Mouse), this protein is Translation initiation factor eIF2B subunit delta (Eif2b4).